The primary structure comprises 443 residues: Trigger factor (443 aa).

A PPIase FKBP-type domain is found at 161–246 (GDKVVIDFQG…IKKIMEGKLP (86 aa)).

It belongs to the FKBP-type PPIase family. Tig subfamily.

The protein localises to the cytoplasm. The catalysed reaction is [protein]-peptidylproline (omega=180) = [protein]-peptidylproline (omega=0). Involved in protein export. Acts as a chaperone by maintaining the newly synthesized protein in an open conformation. Functions as a peptidyl-prolyl cis-trans isomerase. The polypeptide is Trigger factor (Legionella pneumophila (strain Lens)).